The chain runs to 144 residues: Maximins 3/H14 (144 aa).

Residues 1–18 (MNFKYIVAVSFLIASAYA) form the signal peptide. 2 consecutive propeptides follow at residues 19–43 (RSVQ…REIR) and 73–122 (RTAE…KKEK). Ile-143 bears the Isoleucine amide mark.

This sequence belongs to the bombinin family. Expressed by the skin glands.

The protein resides in the secreted. In terms of biological role, maximin-3 shows antibacterial activity against both Gram-positive and Gram-negative bacteria. It also shows antimicrobial activity against the fungus C.albicans, but not against A.flavus nor P.uticale. It has little hemolytic activity. It possess a significant cytotoxicity against tumor cell lines. It possess a significant anti-HIV activity. It shows high spermicidal activity. Its function is as follows. Maximin-H14 shows antimicrobial activity against bacteria and against the fungus C.albicans. Shows strong hemolytic activity. This Bombina maxima (Giant fire-bellied toad) protein is Maximins 3/H14.